The following is a 234-amino-acid chain: MPLKDLPPDARPREKLLARGPGALSDVELLAVLLRTGIKGKGVLQMARELLELKKSGSDDNDGFDGIAGLLHATSDDLKRIKGLGPAKRAELVAVLELSRRALAQQLKERTIFATPDAVKHYLQLHLAAKPHEVFAVLFLDVQNRLLALEELFRGTLTQTSVYPREVVLRALHHQASSVVLAHNHPSGTVQPSRADEMLTQTLKTTLALIDVRVLDHVIVAPGEALSMAERGLL.

The 123-residue stretch at 112-234 (IFATPDAVKH…ALSMAERGLL (123 aa)) folds into the MPN domain. His183, His185, and Asp196 together coordinate Zn(2+). The short motif at 183–196 (HNHPSGTVQPSRAD) is the JAMM motif element.

It belongs to the UPF0758 family.

The chain is UPF0758 protein Rfer_3252 from Albidiferax ferrireducens (strain ATCC BAA-621 / DSM 15236 / T118) (Rhodoferax ferrireducens).